The sequence spans 387 residues: Proline-rich protein 5 (387 aa).

Interaction with RICTOR stretches follow at residues 10–96 (MSSP…LTKG) and 189–219 (HESRGVTEDYLRLETLIQKVVSPYLGTYGLY). A disordered region spans residues 13–34 (PSLSDLGKREPGAAGTDERGTQ). A compositionally biased stretch (basic and acidic residues) spans 18 to 33 (LGKREPGAAGTDERGT). A Phosphoserine modification is found at Ser-253. Residues 262 to 387 (NPVAEHEAEG…EAPGGRPSVV (126 aa)) are disordered. The span at 305 to 314 (SGTFRSSPTP) shows a compositional bias: polar residues. Ser-373 is subject to Phosphoserine.

This sequence belongs to the PROTOR family. Associated component of the mechanistic target of rapamycin complex 2 (mTORC2). Binds directly to MTOR and RICTOR within the TORC2 complex. As to expression, ubiquitously expressed. Expressed at high levels in kidney.

In terms of biological role, associated subunit of mTORC2, which regulates cell growth and survival in response to hormonal signals. mTORC2 is activated by growth factors, but, in contrast to mTORC1, seems to be nutrient-insensitive. mTORC2 seems to function upstream of Rho GTPases to regulate the actin cytoskeleton, probably by activating one or more Rho-type guanine nucleotide exchange factors. PRR5 plays an important role in regulation of PDGFRB expression and in modulation of platelet-derived growth factor signaling. May act as a tumor suppressor in breast cancer. The protein is Proline-rich protein 5 of Mus musculus (Mouse).